The primary structure comprises 78 residues: Small ribosomal subunit protein bS20 (78 aa).

Positions 55-78 are disordered; sequence KSKGLIHKNKASRDKARLASKLAK.

Belongs to the bacterial ribosomal protein bS20 family.

In terms of biological role, binds directly to 16S ribosomal RNA. This chain is Small ribosomal subunit protein bS20, found in Streptococcus mutans serotype c (strain ATCC 700610 / UA159).